The sequence spans 79 residues: Putative Fis-like DNA-binding protein (79 aa).

The segment at residues 55–74 (QSKASVMLGLNRNTLRKKLI) is a DNA-binding region (H-T-H motif).

Belongs to the transcriptional regulatory Fis family.

The polypeptide is Putative Fis-like DNA-binding protein (Neisseria meningitidis serogroup A / serotype 4A (strain DSM 15465 / Z2491)).